The primary structure comprises 727 residues: MGTATAQPALRPQTSTVIGGLHGAAVLDNTGRTVIDVTDFGADPSGKADSAAAVSAAMAHAKTVGGPTTLHFPTGTYHIWPERTPKRELYVSNTVGSDQAFRTKNIGILVEDMRDVVVDGGGSRIVNHGFQTVFAAIRSSDVRFTNFSQTWVAPKTVDITVADAGVVSGQAYRIIDIPETYDYAVEGTSVRWNGERGPATGQPYWTGTNSFDYSQVHDPATNRTWRTSNPVFPERHEDHRPRRRQVRITYGDSTAPGDRGYVYQMREVTRDTPGALFWESSRVTVDHLRLGYLHGFGIVGQLSEDIGIDSVTFKADRGSGRVTSGFADHIQMSGVKGTVRITNSVFDNPQDDPINIHGTYLQATAAERETLQLRYMHNETSGFPQFYPGDTIELVDKRTMLAAPGATAKVVSVTGPTGSGVPAGTDPDTYLRTMTVVLDRTLPAAVLAAPGDYVAENTTYTPTVEITGNTFQAVPTRGILVTTRRPVRIENNRFDGMSMASIYISSDARSWYESGPVRNVTIRGNVFDRPASPVIFFDPTNQDFVAGQPVHRNVLIEDNDFNLTGGTILSGRGVGGLTFRDNRVERYPHLRLTGPSRALRVGDTTTVTTDAPPPSHTSPLFTFDGADDITLANNTYGNGFNKRVNTANMDVSEITVTADGLALNADSISSAPVAVSYSSSRPKVATVDSEGVVKALSGGTTSITARATIGGVRVTSNPVKVVVATER.

The interval 220–241 (ATNRTWRTSNPVFPERHEDHRP) is disordered. A compositionally biased stretch (polar residues) spans 221 to 230 (TNRTWRTSNP). PbH1 repeat units lie at residues 336–358 (KGTV…NIHG), 461–483 (TPTV…LVTT), 484–506 (RRPV…YISS), 517–538 (VRNV…IFFD), 551–572 (HRNV…LSGR), and 574–603 (VGGL…RVGD).

The protein belongs to the glycosyl hydrolase 110 family. A subfamily.

The catalysed reaction is Hydrolysis of terminal, non-reducing branched (1-&gt;3)-alpha-D-galactosidic residues, producing free D-galactose.. It carries out the reaction Hydrolysis of terminal, non-reducing alpha-D-galactose residues in alpha-D-galactosides, including galactose oligosaccharides, galactomannans and galactolipids.. Functionally, alpha-galactosidase that specifically removes branched alpha-1,3-linked galactose residues present in blood group B antigens. Has no activity toward linear alpha-1,3-linked galactose residues. In Peterkaempfera griseoplana (Streptacidiphilus griseoplanus), this protein is Alpha-1,3-galactosidase A (glaA).